We begin with the raw amino-acid sequence, 282 residues long: Diaminopimelate epimerase (282 aa).

Substrate is bound by residues asparagine 13, glutamine 45, and asparagine 64. Cysteine 73 functions as the Proton donor in the catalytic mechanism. Substrate contacts are provided by residues 74–75 (GN), asparagine 155, asparagine 189, and 207–208 (ER). Cysteine 216 serves as the catalytic Proton acceptor. A substrate-binding site is contributed by 217–218 (GS).

Belongs to the diaminopimelate epimerase family. In terms of assembly, homodimer.

The protein localises to the cytoplasm. The catalysed reaction is (2S,6S)-2,6-diaminopimelate = meso-2,6-diaminopimelate. Its pathway is amino-acid biosynthesis; L-lysine biosynthesis via DAP pathway; DL-2,6-diaminopimelate from LL-2,6-diaminopimelate: step 1/1. In terms of biological role, catalyzes the stereoinversion of LL-2,6-diaminopimelate (L,L-DAP) to meso-diaminopimelate (meso-DAP), a precursor of L-lysine and an essential component of the bacterial peptidoglycan. This is Diaminopimelate epimerase from Bartonella bacilliformis (strain ATCC 35685 / KC583 / Herrer 020/F12,63).